The chain runs to 101 residues: Replication restart protein PriB (101 aa).

One can recognise an SSB domain in the interval 1-101 (MTTNNLVLAG…LHAENVELKT (101 aa)).

Belongs to the PriB family. As to quaternary structure, homodimer. Interacts with PriA and DnaT. Component of the replication restart primosome. Primosome assembly occurs via a 'hand-off' mechanism. PriA binds to replication forks, subsequently PriB then DnaT bind; DnaT then displaces ssDNA to generate the helicase loading substrate.

Functionally, involved in the restart of stalled replication forks, which reloads the replicative helicase on sites other than the origin of replication; the PriA-PriB pathway is the major replication restart pathway. During primosome assembly it facilitates complex formation between PriA and DnaT on DNA; stabilizes PriA on DNA. Stimulates the DNA unwinding activity of PriA helicase. This chain is Replication restart protein PriB, found in Shewanella piezotolerans (strain WP3 / JCM 13877).